The chain runs to 515 residues: Cytochrome P450 monooxygenase nsrP (515 aa).

A helical transmembrane segment spans residues 20–40 (FGTAAFLAVLLSALAFLSYTP). N-linked (GlcNAc...) asparagine glycans are attached at residues Asn-84, Asn-406, and Asn-411. Cys-452 is a binding site for heme.

It belongs to the cytochrome P450 family. It depends on heme as a cofactor.

It localises to the membrane. It participates in secondary metabolite biosynthesis. In terms of biological role, cytochrome P450 monooxygenase; part of the gene cluster that mediates the biosynthesis of the tetrahydroxanthone dimer neosartorin, which exhibits antibacterial activity. The two different monomeric units appear to be synthesized by the same set of enzymes, among which the Baeyer-Villiger monooxygenase nsrF is the key enzyme for the divergence of the biosynthetic routes. The pathway begins with the synthesis of atrochrysone thioester by the polyketide synthase nsrB. The atrochrysone carboxyl ACP thioesterase nsrC then breaks the thioester bond and releases the atrochrysone carboxylic acid from AacuL. Atrochrysone carboxylic acid is decarboxylated by the decarboxylase nsrE, and oxidized by the anthrone oxygenase nsrD to yield emodin. Emodin is then reduced to emodin hydroquinone by the oxidoreductase nsrR. A-ring reduction by the short chain dehydrogenase nsrJ, dehydration by the scytalone dehydratase-like protein nsrI and probable spontaneous re-oxidation, results in overall deoxygenation to chrysophanol. The Baeyer-Villiger monooxygenase nsrF accepts chrysophanol as a substrate to insert one oxygen atom at two different positions to yield the precursors of both monomric units. NsrF is promiscuous/flexible in interacting with the 2 (non methylated and methylated) aromatic rings of chrysophanol, thus diverging the biosynthetic pathway at this point. After the hydrolysis of the lactones, methylesterification by the methyltransferase nsrG yields respectively moniliphenone and 2,2',6'-trihydroxy-4-methyl-6-methoxya-cyldiphenylmethanone. The next steps are the hydroxylation by the FAD-dependent monooxygenase nsrK, followed by isomerization by the monooxygenase nsrQ. The short chain dehydrogenase/reductase nsrO then catalyzes the C-5 ketoreduction to give the xanthone skeleton of blennolide C and 5-acetylblennolide A. The acetyltransferase nsrL has a strict substrate specificity and uses only blennolide A but not blennolide C to yield 5-acetylblennolide A as the single-acetylated product. In the final step of the biosynthesis, the heterodimerization of the 2 xanthones, blennolide C and 5-acetylblennolide A, is catalyzed by the cytochrome P450 monooxygenase nsrP. NsrP can utilize at least three different xanthones as its substrates to perform the dimerization reaction. The protein is Cytochrome P450 monooxygenase nsrP of Aspergillus novofumigatus (strain IBT 16806).